The following is a 166-amino-acid chain: 3-isopropylmalate dehydratase small subunit (166 aa).

The protein belongs to the LeuD family. LeuD type 2 subfamily. Heterodimer of LeuC and LeuD.

It carries out the reaction (2R,3S)-3-isopropylmalate = (2S)-2-isopropylmalate. It participates in amino-acid biosynthesis; L-leucine biosynthesis; L-leucine from 3-methyl-2-oxobutanoate: step 2/4. Catalyzes the isomerization between 2-isopropylmalate and 3-isopropylmalate, via the formation of 2-isopropylmaleate. This is 3-isopropylmalate dehydratase small subunit from Nautilia profundicola (strain ATCC BAA-1463 / DSM 18972 / AmH).